A 228-amino-acid chain; its full sequence is L-ribulose-5-phosphate 4-epimerase UlaF (228 aa).

Substrate-binding positions include 26–27, 43–44, and 72–73; these read GN, SG, and SS. Zn(2+)-binding residues include aspartate 74, histidine 93, and histidine 95. Catalysis depends on aspartate 118, which acts as the Proton donor/acceptor. Histidine 167 provides a ligand contact to Zn(2+). The Proton donor/acceptor role is filled by tyrosine 225.

It belongs to the aldolase class II family. AraD/FucA subfamily. Requires Zn(2+) as cofactor.

The enzyme catalyses L-ribulose 5-phosphate = D-xylulose 5-phosphate. Its pathway is cofactor degradation; L-ascorbate degradation; D-xylulose 5-phosphate from L-ascorbate: step 4/4. Its function is as follows. Catalyzes the isomerization of L-ribulose 5-phosphate to D-xylulose 5-phosphate. Is involved in the anaerobic L-ascorbate utilization. The sequence is that of L-ribulose-5-phosphate 4-epimerase UlaF from Escherichia fergusonii (strain ATCC 35469 / DSM 13698 / CCUG 18766 / IAM 14443 / JCM 21226 / LMG 7866 / NBRC 102419 / NCTC 12128 / CDC 0568-73).